A 249-amino-acid chain; its full sequence is Tetrahydromethanopterin S-methyltransferase subunit A (249 aa).

At 1–227 (MADKKEVIQN…KISSGYYAGK (227 aa)) the chain is on the cytoplasmic side. Histidine 84 provides a ligand contact to 5-hydroxybenzimidazolylcob(I)amide. Residues 228–248 (IEGIVIGFILTLVFLIIIIQG) form a helical membrane-spanning segment. Leucine 249 is a topological domain (extracellular).

It belongs to the MtrA family. In terms of assembly, the complex is composed of 8 subunits; MtrA, MtrB, MtrC, MtrD, MtrE, MtrF, MtrG and MtrH. Requires 5-hydroxybenzimidazolylcob(I)amide as cofactor.

The protein localises to the cell membrane. The enzyme catalyses 5-methyl-5,6,7,8-tetrahydromethanopterin + coenzyme M + 2 Na(+)(in) = 5,6,7,8-tetrahydromethanopterin + methyl-coenzyme M + 2 Na(+)(out). It functions in the pathway one-carbon metabolism; methanogenesis from CO(2); methyl-coenzyme M from 5,10-methylene-5,6,7,8-tetrahydromethanopterin: step 2/2. In terms of biological role, part of a complex that catalyzes the formation of methyl-coenzyme M and tetrahydromethanopterin from coenzyme M and methyl-tetrahydromethanopterin. This is an energy-conserving, sodium-ion translocating step. The protein is Tetrahydromethanopterin S-methyltransferase subunit A of Methanosphaera stadtmanae (strain ATCC 43021 / DSM 3091 / JCM 11832 / MCB-3).